We begin with the raw amino-acid sequence, 152 residues long: Ubiquitin-conjugating enzyme E2 A (152 aa).

Positions 4 to 150 (PARRRLMRDF…VSAIVEQSWR (147 aa)) constitute a UBC core domain. The active-site Glycyl thioester intermediate is the Cys-88. Position 120 is a phosphoserine; by CDK9 (Ser-120).

The protein belongs to the ubiquitin-conjugating enzyme family. Interacts with RAD18 and WAC. Interacts with RFPL4A and CCNB1. In terms of processing, phosphorylation at Ser-120 by CDK9 increases activity towards histone H2B.

It localises to the late endosome. The protein localises to the lysosome. The enzyme catalyses S-ubiquitinyl-[E1 ubiquitin-activating enzyme]-L-cysteine + [E2 ubiquitin-conjugating enzyme]-L-cysteine = [E1 ubiquitin-activating enzyme]-L-cysteine + S-ubiquitinyl-[E2 ubiquitin-conjugating enzyme]-L-cysteine.. It functions in the pathway protein modification; protein ubiquitination. In terms of biological role, E2 ubiquitin-conjugating enzyme that accepts ubiquitin from the ubiquitin-activating enzyme E1 and transfers it to a E3 ubiquitin-protein ligase. In vitro catalyzes 'Lys-11', as well as 'Lys-48'-linked polyubiquitination. Together with the E3 enzyme BRE1 (RNF20 and/or RNF40), plays a role in transcription regulation by catalyzing the monoubiquitination of histone H2B at 'Lys-120' to form H2BK120ub1. H2BK120ub1 gives a specific tag for epigenetic transcriptional activation, elongation by RNA polymerase II, telomeric silencing, and is also a prerequisite for H3K4me and H3K79me formation. Involved in mitophagy by acting as a E2 ubiquitin-conjugating enzyme for PRKN. In association with the E3 enzyme UBR4, is involved in N-end rule-dependent protein degradation. In association with the E3 ubiquitin-protein ligase complex SIFI, inhibits the mitochondrial stress response by acting as a E2 ubiquitin-conjugating enzyme for UBR4 and KCMF1. The sequence is that of Ubiquitin-conjugating enzyme E2 A from Homo sapiens (Human).